The sequence spans 344 residues: Dihydroorotate dehydrogenase (quinone) (344 aa).

FMN is bound by residues 61-65 (AGLDK) and Thr-85. Lys-65 contributes to the substrate binding site. 110–114 (NRMGF) is a substrate binding site. 2 residues coordinate FMN: Asn-138 and Asn-171. Asn-171 is a binding site for substrate. The Nucleophile role is filled by Ser-174. Asn-176 provides a ligand contact to substrate. FMN contacts are provided by Lys-216 and Thr-244. Residue 245 to 246 (NT) participates in substrate binding. Residues Gly-267, Gly-296, and 317 to 318 (YS) each bind FMN.

This sequence belongs to the dihydroorotate dehydrogenase family. Type 2 subfamily. In terms of assembly, monomer. Requires FMN as cofactor.

The protein localises to the cell membrane. It catalyses the reaction (S)-dihydroorotate + a quinone = orotate + a quinol. Its pathway is pyrimidine metabolism; UMP biosynthesis via de novo pathway; orotate from (S)-dihydroorotate (quinone route): step 1/1. Its function is as follows. Catalyzes the conversion of dihydroorotate to orotate with quinone as electron acceptor. The sequence is that of Dihydroorotate dehydrogenase (quinone) from Psychrobacter cryohalolentis (strain ATCC BAA-1226 / DSM 17306 / VKM B-2378 / K5).